Reading from the N-terminus, the 762-residue chain is Probable inorganic carbon transporter subunit DabA (762 aa).

Zn(2+) is bound by residues cysteine 279, aspartate 281, histidine 461, and cysteine 476.

This sequence belongs to the inorganic carbon transporter (TC 9.A.2) DabA family. Forms a complex with DabB. Zn(2+) is required as a cofactor.

The protein localises to the cell inner membrane. Its function is as follows. Part of an energy-coupled inorganic carbon pump. This chain is Probable inorganic carbon transporter subunit DabA, found in Legionella pneumophila (strain Lens).